The primary structure comprises 244 residues: MNHDYRTIDLFGLTFNLTNILMITVASVIVLLIAILTTRTLSIRPGKAQNFMEWIVDFVRNIIGSTMDLKTGANFLALGVTLLMYIFVSNMLGLPFSVTVGHELWWKSPTADPAITLTLAVMVVSLTHYYGVKMKGLKEYSKDYLRPVPLMFPMKIIEEFANTLTLGLRLYGNIFAGEILLGLLANLATNFYSNSFFLGLVGTVGAIIPMLAWQAFSLFIGTIQAFIFTMLTMVYMSHKISHDH.

6 consecutive transmembrane segments (helical) span residues 17–37 (LTNI…AILT), 75–95 (FLAL…LGLP), 112–132 (DPAI…YYGV), 164–184 (LTLG…LGLL), 196–216 (FFLG…WQAF), and 217–237 (SLFI…VYMS).

This sequence belongs to the ATPase A chain family. As to quaternary structure, F-type ATPases have 2 components, CF(1) - the catalytic core - and CF(0) - the membrane proton channel. CF(1) has five subunits: alpha(3), beta(3), gamma(1), delta(1), epsilon(1). CF(0) has three main subunits: a(1), b(2) and c(9-12). The alpha and beta chains form an alternating ring which encloses part of the gamma chain. CF(1) is attached to CF(0) by a central stalk formed by the gamma and epsilon chains, while a peripheral stalk is formed by the delta and b chains.

Its subcellular location is the cell membrane. Functionally, key component of the proton channel; it plays a direct role in the translocation of protons across the membrane. This chain is ATP synthase subunit a, found in Bacillus velezensis (strain DSM 23117 / BGSC 10A6 / LMG 26770 / FZB42) (Bacillus amyloliquefaciens subsp. plantarum).